The sequence spans 494 residues: MAWPNVFQRGSLLSQFSHHHVVVFLLTFFSYSLLHASRKTFSNVKVSISEQWTPSAFNTSVELPVEIWSSNHLFPSAEKATLFLGTLDTIFLFSYAVGLFISGIVGDRLNLRWVLSFGMCSSALVVFVFGALTEWLRFYNKWLYCCLWIVNGLLQSTGWPCVVAVMGNWFGKAGRGVVFGLWSACASVGNILGACLASSVLQYGYEYAFLVTASVQFAGGIVIFFGLLVSPEEIGLSGIEAEENFEEDSHRPLINGGENEDEYEPNYSIQDDSSVAQVKAISFYQACCLPGVIPYSLAYACLKLVNYSFFFWLPFYLSNNFGWKEAEADKLSIWYDVGGIIGGTLQGFISDVLQKRAPVLALSLLLAVGSLIGYSRSPNDKSINALLMTVTGFFIGGPSNMISSAISADLGRQELIQRSSEALATVTGIVDGSGSIGAAVGQYLVSLIRDKLGWMWVFYFFILMTSCTIVFISPLIVREIFSLVLRRQAHILRE.

Residues 16 to 36 (FSHHHVVVFLLTFFSYSLLHA) traverse the membrane as a helical segment. N-linked (GlcNAc...) asparagine glycosylation is present at N58. The next 5 helical transmembrane spans lie at 81 to 101 (TLFLGTLDTIFLFSYAVGLFI), 113 to 133 (WVLSFGMCSSALVVFVFGALT), 147 to 167 (LWIVNGLLQSTGWPCVVAVMG), 177 to 197 (VVFGLWSACASVGNILGACLA), and 209 to 229 (FLVTASVQFAGGIVIFFGLLV). N266 is a glycosylation site (N-linked (GlcNAc...) asparagine). 6 helical membrane-spanning segments follow: residues 297–317 (LAYACLKLVNYSFFFWLPFYL), 333–353 (IWYDVGGIIGGTLQGFISDVL), 357–377 (APVLALSLLLAVGSLIGYSRS), 386–406 (LLMTVTGFFIGGPSNMISSAI), 428–448 (GIVDGSGSIGAAVGQYLVSLI), and 452–472 (LGWMWVFYFFILMTSCTIVFI).

This sequence belongs to the major facilitator superfamily. Organophosphate:Pi antiporter (OPA) (TC 2.A.1.4) family. As to quaternary structure, interacts with ATRAID; the interaction is direct and both proteins are mutually dependent for their stability. Glycosylated. Expressed in liver, kidney, intestine and pancreas.

The protein localises to the endoplasmic reticulum membrane. It is found in the lysosome membrane. In terms of biological role, unlike the other SLC37 members, lacks glucose-6-phosphate antiporter activity. In osteoclasts, forms a transporter complex with ATRAID for nitrogen-containing-bisphophonates (N-BPs) required for releasing N-BP molecules that have trafficked to lysosomes through fluid-phase endocytosis into the cytosol. The protein is Sugar phosphate exchanger 3 of Homo sapiens (Human).